The primary structure comprises 407 residues: MIQVLLVTLCLAAFPYQGSSIILESGNVNDYEVVYPRKVTPVPKGAVQPKYEDAMQYELKVNGEPVVLHLERNKGLFSKDYSETHYSPDGRKITTYPPVEDHCYYHGRIQNDADSIASISACNGLKGHFKLQGEMYLIEPLELSDSEAHAVFKYENVEKEDEAPKICGVTQNWESYEPIKKASQLNLNYQYQRYVELVTVVDHGMYTKYNGDSDKIRQWVHQMVNTMKESYRYMYIDISLAGVEIWSNKDLIDVQPAARHTLDSFGEWRERDLLHRISHDNAQLLTSTDFDGPTIGLAYVGTMCDPKLSTGVVEDHSKINFLVAVTMAHEMGHNLGMRHDTGSCSCGGYSCIMSPVISDDSPKYFSNCSYIQCWDFIMKENPQCILNKPLRTDTVSTPVSGDELLEA.

A signal peptide spans methionine 1–serine 20. The propeptide occupies isoleucine 21–leucine 187. The Peptidase M12B domain occupies arginine 193–proline 389. Glutamate 196 and aspartate 280 together coordinate Ca(2+). Intrachain disulfides connect cysteine 304/cysteine 384, cysteine 344/cysteine 368, and cysteine 346/cysteine 351. Histidine 329 lines the Zn(2+) pocket. Residue glutamate 330 is part of the active site. Zn(2+)-binding residues include histidine 333 and histidine 339. A glycan (N-linked (GlcNAc...) asparagine) is linked at asparagine 367. Cysteine 384 and asparagine 387 together coordinate Ca(2+).

Belongs to the venom metalloproteinase (M12B) family. P-I subfamily. As to quaternary structure, monomer. Zn(2+) is required as a cofactor. In terms of processing, contains sialic acid terminally alpha(2-6)-linked to galactose in a complex N-glycan chain. In terms of tissue distribution, expressed by the venom gland.

It is found in the secreted. Functionally, this zinc hemorrhagic metalloproteinase has fibrino(geno)lytic activities. It causes hemorrhage and has myonecrotic activity on both fiber types I and II. The recombinant enzyme, without post-translational modifications, also has proteolytic activity, but does not show any hemorrhagic activity. This chain is Snake venom metalloproteinase ACLH, found in Agkistrodon contortrix laticinctus (Broad-banded copperhead).